Consider the following 138-residue polypeptide: Salivary protein 15 Iper-3 (138 aa).

Residues 1-21 (MESFVAMKVVCITVLFVIVAV) form the signal peptide. 5 N-linked (GlcNAc...) asparagine glycosylation sites follow: N30, N42, N68, N107, and N127. The segment at 119-138 (GPNGQKCANKSQCVGHIPGC) is CD4-binding.

Belongs to the salp15 family. Interacts with host CD4. Interacts with host DC-SIGN (CD209). Interacts with Borrelia outer surface protein C (OspC). As to expression, expressed in salivary glands.

It localises to the secreted. Salivary tick protein that downregulates host immune system by binding to both dendritic cells, and CD4(+) T cells. Specifically binds to the CD4 coreceptor on T cells. This interaction prevents the activation of the Src kinase, Lck, and its downstream substrate Zap-70, and results in deficient activation of PLCgamma1, the repression of calcium fluxes triggered by T-cell antigen receptor (TCR) ligation, and a subsequent reduction in interleukin-2 production. This salivary protein also binds to DC-SIGN (CD209) on dendritic cells (DC) and activates the Raf-1 kinase/MEK signaling pathway that results in down-regulating expression of pro-inflammatory cytokines. Furthermore, it inhibits T cell proliferation induced by DCs. It also inhibits in vitro keratinocyte inflammation induced by Borrelia burgdorferi or by the major outer surface protein (OspC) of Borrelia. In addition, it downregulates chemokines and monocyte chemoattractant protein 1, as well as several antimicrobial peptides such as defensins, cathelicidin, psoriasin, and RNase 7. Apart from its immunomodulatory activities, it is also associated with protection of Borrelia spirochetes from antibody-mediated killing through its binding to OspC. In vivo, tests on different immune disease animal models show promising therapeutic results, e.g., in inhibiting HIV infection, experimental autoimmune encephalomyelitis, transplantation rejection, and asthma. The protein is Salivary protein 15 Iper-3 of Ixodes persulcatus (Taiga tick).